A 349-amino-acid chain; its full sequence is RxLR effector protein CRE15 (349 aa).

A signal peptide spans 1–33 (MITFKRLSSARWGALLTSIAVLFFLAITKGADA). The short motif at 46–62 (RRLRTTTADAYYASEDR) is the RxLR-dEER element.

Belongs to the RxLR effector family. Interacts directly with the potato ortholog of vascular highway 1 (VH1)-interacting kinase (VIK), encoding a predicted MEK kinase (MAP3K).

The protein localises to the secreted. The protein resides in the host cell membrane. Effector that promotes P.infestans virulence in Nicotiana benthamiana and potato. Attenuates cell death triggered by the pathogen-associated molecular pattern infestin 1 (INF1), indicating that the effector suppresses pattern-triggered immunity. However, it does not attenuate cell death triggered by a range of resistance proteins, suggesting that it specifically suppresses INF1-triggered cell death (ICD). Targets host MAP3K VIK in order to utilize or promote its ability to negatively regulate immunity. This is RxLR effector protein CRE15 from Phytophthora infestans (strain T30-4) (Potato late blight agent).